The primary structure comprises 96 residues: GTPase HRas (96 aa).

The residue at position 1 (M1) is an N-acetylmethionine. Residue T2 is modified to N-acetylthreonine; in GTPase HRas, N-terminally processed. 10–17 (GAGGVGKS) lines the GTP pocket. Positions 32-40 (YDPTIEDSY) match the Effector region motif. Position 57-61 (57-61 (DTAGQ)) interacts with GTP.

This sequence belongs to the small GTPase superfamily. Ras family. In terms of assembly, in its GTP-bound form interacts with PLCE1. Interacts with TBC1D10C. Interacts with RGL3. Interacts with HSPD1. Found in a complex with at least BRAF, HRAS, MAP2K1, MAPK3 and RGS14. Interacts (active GTP-bound form) with RGS14 (via RBD 1 domain). Forms a signaling complex with RASGRP1 and DGKZ. Interacts with RASSF5. Interacts with PDE6D. Interacts with IKZF3. Interacts with RACK1. Interacts with PIK3CG; the interaction is required for membrane recruitment and beta-gamma G protein dimer-dependent activation of the PI3K gamma complex PIK3CG:PIK3R6. Interacts with RAPGEF2. Interacts (active GTP-bound form) with both SHOC2 and PP1c (all isoforms) to form a tertiary complex; SHOC2 and PP1c preferably bind M-Ras/MRAS, but they also bind K-Ras/KRAS, N-Ras/NRAS and H-Ras/HRAS. Interacts (in GTP-bound form) with Oog1. Interacts (GTP-bound form) with MAPKAP1/SIN1; inhibiting H-Ras/HRAS activity. Ubiquitinated by the BCR(LZTR1) E3 ubiquitin ligase complex at Lys-170 in a non-degradative manner, leading to inhibit Ras signaling by decreasing Ras association with membranes.

The protein resides in the cell membrane. Its subcellular location is the golgi apparatus. It localises to the golgi apparatus membrane. The catalysed reaction is GTP + H2O = GDP + phosphate + H(+). Alternates between an inactive form bound to GDP and an active form bound to GTP. Activated by a guanine nucleotide-exchange factor (GEF) and inactivated by a GTPase-activating protein (GAP). In terms of biological role, ras proteins bind GDP/GTP and possess intrinsic GTPase activity. This Mesocricetus auratus (Golden hamster) protein is GTPase HRas (HRAS).